Reading from the N-terminus, the 291-residue chain is Nucleotide-binding protein lmo2474 (291 aa).

Residue 13–20 (GMSGAGKT) coordinates ATP. A GTP-binding site is contributed by 63–66 (DLRG).

It belongs to the RapZ-like family.

Its function is as follows. Displays ATPase and GTPase activities. In Listeria monocytogenes serovar 1/2a (strain ATCC BAA-679 / EGD-e), this protein is Nucleotide-binding protein lmo2474.